We begin with the raw amino-acid sequence, 196 residues long: Ribosome maturation factor RimP (196 aa).

Positions Lys-131–Lys-145 are enriched in basic residues. Positions Lys-131–Gln-153 are disordered.

It belongs to the RimP family.

The protein localises to the cytoplasm. In terms of biological role, required for maturation of 30S ribosomal subunits. The polypeptide is Ribosome maturation factor RimP (Corynebacterium urealyticum (strain ATCC 43042 / DSM 7109)).